The chain runs to 442 residues: Tubulin beta chain (442 aa).

Residues Gln11, Glu67, Ser136, Gly140, Thr141, Gly142, and Asn202 each contribute to the GTP site. Glu67 is a Mg(2+) binding site.

Belongs to the tubulin family. In terms of assembly, dimer of alpha and beta chains. A typical microtubule is a hollow water-filled tube with an outer diameter of 25 nm and an inner diameter of 15 nM. Alpha-beta heterodimers associate head-to-tail to form protofilaments running lengthwise along the microtubule wall with the beta-tubulin subunit facing the microtubule plus end conferring a structural polarity. Microtubules usually have 13 protofilaments but different protofilament numbers can be found in some organisms and specialized cells. It depends on Mg(2+) as a cofactor.

The protein localises to the cytoplasm. It is found in the cytoskeleton. Tubulin is the major constituent of microtubules, a cylinder consisting of laterally associated linear protofilaments composed of alpha- and beta-tubulin heterodimers. Microtubules grow by the addition of GTP-tubulin dimers to the microtubule end, where a stabilizing cap forms. Below the cap, tubulin dimers are in GDP-bound state, owing to GTPase activity of alpha-tubulin. In Euglena gracilis, this protein is Tubulin beta chain (TUBB).